The sequence spans 354 residues: Sulfate/thiosulfate import ATP-binding protein CysA (354 aa).

The ABC transporter domain occupies 3–237 (IEVRGLSKRF…PATPFVYGFL (235 aa)). Position 35 to 42 (35 to 42 (GPSGCGKT)) interacts with ATP.

The protein belongs to the ABC transporter superfamily. Sulfate/tungstate importer (TC 3.A.1.6) family. The complex is composed of two ATP-binding proteins (CysA), two transmembrane proteins (CysT and CysW) and a solute-binding protein (CysP).

The protein resides in the cell inner membrane. The enzyme catalyses sulfate(out) + ATP + H2O = sulfate(in) + ADP + phosphate + H(+). The catalysed reaction is thiosulfate(out) + ATP + H2O = thiosulfate(in) + ADP + phosphate + H(+). Functionally, part of the ABC transporter complex CysAWTP involved in sulfate/thiosulfate import. Responsible for energy coupling to the transport system. The sequence is that of Sulfate/thiosulfate import ATP-binding protein CysA from Bordetella bronchiseptica (strain ATCC BAA-588 / NCTC 13252 / RB50) (Alcaligenes bronchisepticus).